The sequence spans 356 residues: Protein-L-isoaspartate O-methyltransferase domain-containing protein 1 (356 aa).

The N-myristoyl glycine moiety is linked to residue G2. S64 is a catalytic residue. 3 adoMet binding motif regions span residues 85–94, 160–164, and 181–191; these read LNLGSGTGYL, YDRIY, and LKVGGILVMPI. The BC-box stretch occupies residues 240 to 250; the sequence is VRNLQDLARIY. Residues 299-331 form a disordered region; sequence PLDSEEDEKMEEDKEEEEKEPGEALKPEEPPQN. Acidic residues predominate over residues 301–318; that stretch reads DSEEDEKMEEDKEEEEKE. Basic and acidic residues predominate over residues 319–331; sequence PGEALKPEEPPQN. Positions 340–343 are CUL-box; sequence LPLP.

Belongs to the methyltransferase superfamily. L-isoaspartyl/D-aspartyl protein methyltransferase family. In terms of assembly, component of the probable ECS(PCMTD1) E3 ubiquitin-protein ligase complex, at least composed of CUL5, ELOB, ELOC, RBX2 and PCMTD1. Interacts (via the BC-box) with ELOB and ELOC; the interaction is direct and stabilizes PCMTD1.

It is found in the cytoplasm. Its subcellular location is the membrane. Its function is as follows. Substrate recognition component of an ECS (Elongin BC-CUL5-SOCS-box protein) E3 ubiquitin ligase complex which mediates the ubiquitination and subsequent proteasomal degradation of target proteins. Specifically binds to the methyltransferase cofactor S-adenosylmethionine (AdoMet) via the N-terminal AdoMet binding motif, but does not display methyltransferase activity. May provide an alternate maintenance pathway for modified proteins by acting as a damage-specific E3 ubiquitin ligase adaptor protein. In Bos taurus (Bovine), this protein is Protein-L-isoaspartate O-methyltransferase domain-containing protein 1 (PCMTD1).